The sequence spans 400 residues: Bifunctional enzyme IspD/IspF (400 aa).

The segment at 1-240 (MQESTMKFGI…EKLSHALPDV (240 aa)) is 2-C-methyl-D-erythritol 4-phosphate cytidylyltransferase. The interval 241–400 (RTGNGYDVHQ…ATVVYQGRPL (160 aa)) is 2-C-methyl-D-erythritol 2,4-cyclodiphosphate synthase. Residues aspartate 247 and histidine 249 each coordinate a divalent metal cation. 4-CDP-2-C-methyl-D-erythritol 2-phosphate contacts are provided by residues 247-249 (DVH) and 273-274 (HS). Residue histidine 281 participates in a divalent metal cation binding. 4-CDP-2-C-methyl-D-erythritol 2-phosphate contacts are provided by residues 295-297 (DIG), 371-374 (TTNE), phenylalanine 378, and arginine 381.

The protein in the N-terminal section; belongs to the IspD/TarI cytidylyltransferase family. IspD subfamily. In the C-terminal section; belongs to the IspF family. Requires a divalent metal cation as cofactor.

It carries out the reaction 2-C-methyl-D-erythritol 4-phosphate + CTP + H(+) = 4-CDP-2-C-methyl-D-erythritol + diphosphate. It catalyses the reaction 4-CDP-2-C-methyl-D-erythritol 2-phosphate = 2-C-methyl-D-erythritol 2,4-cyclic diphosphate + CMP. It participates in isoprenoid biosynthesis; isopentenyl diphosphate biosynthesis via DXP pathway; isopentenyl diphosphate from 1-deoxy-D-xylulose 5-phosphate: step 2/6. The protein operates within isoprenoid biosynthesis; isopentenyl diphosphate biosynthesis via DXP pathway; isopentenyl diphosphate from 1-deoxy-D-xylulose 5-phosphate: step 4/6. Functionally, bifunctional enzyme that catalyzes the formation of 4-diphosphocytidyl-2-C-methyl-D-erythritol from CTP and 2-C-methyl-D-erythritol 4-phosphate (MEP) (IspD), and catalyzes the conversion of 4-diphosphocytidyl-2-C-methyl-D-erythritol 2-phosphate (CDP-ME2P) to 2-C-methyl-D-erythritol 2,4-cyclodiphosphate (ME-CPP) with a corresponding release of cytidine 5-monophosphate (CMP) (IspF). The polypeptide is Bifunctional enzyme IspD/IspF (Agrobacterium fabrum (strain C58 / ATCC 33970) (Agrobacterium tumefaciens (strain C58))).